Here is a 66-residue protein sequence, read N- to C-terminus: MKREIHPEYKKAKVVCACGNSFETGSTKEELKVEICSSCHPFFTGKQKLVDSGGRVEKFKRKYGLE.

Zn(2+) contacts are provided by cysteine 16, cysteine 18, cysteine 36, and cysteine 39.

This sequence belongs to the bacterial ribosomal protein bL31 family. Type A subfamily. In terms of assembly, part of the 50S ribosomal subunit. The cofactor is Zn(2+).

Binds the 23S rRNA. This chain is Large ribosomal subunit protein bL31, found in Natranaerobius thermophilus (strain ATCC BAA-1301 / DSM 18059 / JW/NM-WN-LF).